Here is an 827-residue protein sequence, read N- to C-terminus: Leucine--tRNA ligase (827 aa).

The 'HIGH' region motif lies at 46 to 56; sequence PYPSGRIHMGH. A 'KMSKS' region motif is present at residues 585 to 589; sequence KMSKS. An ATP-binding site is contributed by Lys-588.

It belongs to the class-I aminoacyl-tRNA synthetase family.

It is found in the cytoplasm. It catalyses the reaction tRNA(Leu) + L-leucine + ATP = L-leucyl-tRNA(Leu) + AMP + diphosphate. The chain is Leucine--tRNA ligase from Desulfotalea psychrophila (strain LSv54 / DSM 12343).